The chain runs to 83 residues: Cytochrome b559 subunit alpha (83 aa).

Residues 21–35 (VIHSITIPSLFIAGW) traverse the membrane as a helical segment. A heme-binding site is contributed by His-23.

Belongs to the PsbE/PsbF family. Heterodimer of an alpha subunit and a beta subunit. PSII is composed of 1 copy each of membrane proteins PsbA, PsbB, PsbC, PsbD, PsbE, PsbF, PsbH, PsbI, PsbJ, PsbK, PsbL, PsbM, PsbT, PsbX, PsbY, PsbZ, Psb30/Ycf12, at least 3 peripheral proteins of the oxygen-evolving complex and a large number of cofactors. It forms dimeric complexes. Heme b is required as a cofactor.

The protein localises to the plastid. The protein resides in the chloroplast thylakoid membrane. In terms of biological role, this b-type cytochrome is tightly associated with the reaction center of photosystem II (PSII). PSII is a light-driven water:plastoquinone oxidoreductase that uses light energy to abstract electrons from H(2)O, generating O(2) and a proton gradient subsequently used for ATP formation. It consists of a core antenna complex that captures photons, and an electron transfer chain that converts photonic excitation into a charge separation. This is Cytochrome b559 subunit alpha from Mesembryanthemum crystallinum (Common ice plant).